Here is a 331-residue protein sequence, read N- to C-terminus: Peroxisomal nicotinamide adenine dinucleotide carrier (331 aa).

Solcar repeat units lie at residues Ser-2–Arg-91, Val-109–Lys-216, and Val-229–Gly-320. 6 helical membrane passes run Leu-5–Leu-25, Leu-63–Tyr-85, Leu-116–Val-136, Val-180–Val-200, Phe-235–Val-255, and Tyr-293–Ile-313.

The protein belongs to the mitochondrial carrier (TC 2.A.29) family. In terms of assembly, homodimer. In terms of tissue distribution, expressed in cotyledons, hypocotyls, vascular tissues, trichomes, hydathodes, seeds, pedicels, flowers and stigma.

The protein localises to the glyoxysome membrane. With respect to regulation, inhibited by pyridoxal 5'-phosphate, bathophenanthroline, tannic acid, mersalyl, mercuric chloride and bromocresol purple. Its function is as follows. Mediates the NAD(+) import into peroxisomes. Favors the NAD(+)(in)/AMP(out) antiport exchange, but is also able to catalyze a low unidirectional transport that might be essential under special conditions. Transports CoA, dephospho-CoA, acetyl-CoA, adenosine 3',5'-diphosphate (PAP), NAD(+), AMP, ADP and NADH, but has no activity with ATP, GTP, GDP, NADPH, NADP(+) or FAD. Required for peroxisomes proliferation. In Arabidopsis thaliana (Mouse-ear cress), this protein is Peroxisomal nicotinamide adenine dinucleotide carrier (PXN).